The following is a 421-amino-acid chain: Phosphoribosylamine--glycine ligase (421 aa).

Positions 108 to 314 (KEIMVKYNVP…FAQNIDDIMM (207 aa)) constitute an ATP-grasp domain. Residue 134–195 (IEEQGAPIVV…EEFLDGEEFS (62 aa)) coordinates ATP. Mg(2+) is bound by residues glutamate 284 and asparagine 286.

It belongs to the GARS family. Mg(2+) is required as a cofactor. It depends on Mn(2+) as a cofactor.

It carries out the reaction 5-phospho-beta-D-ribosylamine + glycine + ATP = N(1)-(5-phospho-beta-D-ribosyl)glycinamide + ADP + phosphate + H(+). The protein operates within purine metabolism; IMP biosynthesis via de novo pathway; N(1)-(5-phospho-D-ribosyl)glycinamide from 5-phospho-alpha-D-ribose 1-diphosphate: step 2/2. The polypeptide is Phosphoribosylamine--glycine ligase (Streptococcus pyogenes serotype M1).